Reading from the N-terminus, the 350-residue chain is MQVSDFHFELPDELIARYPQPERTASRLLHLNGNSGELHDGQFTDVLDLVQHGDLVVFNNTRVIPARMFGVKASGGKLEVLVERVLDDHSVLAHVRCSKSPKPGNQLWLGENQEYEAEMVARHDTLFEIRFTSEKKVLDILDEIGHMPLPPYIDRPDEDADKERYQTVYNEKPGAVAAPTAGLHFDTDILEKMKAKGVEFAYVTLHVGAGTFQPVRVDNILDHHMHSEYAEVSQEVVDAIKATKARGGRVISVGTTSVRSLESAAQHALKQGTELAPFFDDTEIFIYPGYEFQVVDALVTNFHLPESTLIMLVSAFAGYDNTMKAYDQAVNHQYRFFSYGDAMFITKKTS.

Belongs to the QueA family. As to quaternary structure, monomer.

It localises to the cytoplasm. It carries out the reaction 7-aminomethyl-7-carbaguanosine(34) in tRNA + S-adenosyl-L-methionine = epoxyqueuosine(34) in tRNA + adenine + L-methionine + 2 H(+). The protein operates within tRNA modification; tRNA-queuosine biosynthesis. Functionally, transfers and isomerizes the ribose moiety from AdoMet to the 7-aminomethyl group of 7-deazaguanine (preQ1-tRNA) to give epoxyqueuosine (oQ-tRNA). In Aliivibrio salmonicida (strain LFI1238) (Vibrio salmonicida (strain LFI1238)), this protein is S-adenosylmethionine:tRNA ribosyltransferase-isomerase.